A 75-amino-acid chain; its full sequence is Small ribosomal subunit protein bS18 (75 aa).

It belongs to the bacterial ribosomal protein bS18 family. As to quaternary structure, part of the 30S ribosomal subunit. Forms a tight heterodimer with protein bS6.

In terms of biological role, binds as a heterodimer with protein bS6 to the central domain of the 16S rRNA, where it helps stabilize the platform of the 30S subunit. The sequence is that of Small ribosomal subunit protein bS18 from Buchnera aphidicola subsp. Baizongia pistaciae (strain Bp).